Consider the following 171-residue polypeptide: Adenine phosphoribosyltransferase (171 aa).

The protein belongs to the purine/pyrimidine phosphoribosyltransferase family. Homodimer.

Its subcellular location is the cytoplasm. It carries out the reaction AMP + diphosphate = 5-phospho-alpha-D-ribose 1-diphosphate + adenine. It functions in the pathway purine metabolism; AMP biosynthesis via salvage pathway; AMP from adenine: step 1/1. Catalyzes a salvage reaction resulting in the formation of AMP, that is energically less costly than de novo synthesis. The polypeptide is Adenine phosphoribosyltransferase (Solidesulfovibrio magneticus (strain ATCC 700980 / DSM 13731 / RS-1) (Desulfovibrio magneticus)).